The following is a 108-amino-acid chain: UPF0145 protein alr2488 (108 aa).

Belongs to the UPF0145 family.

This chain is UPF0145 protein alr2488, found in Nostoc sp. (strain PCC 7120 / SAG 25.82 / UTEX 2576).